The primary structure comprises 418 residues: Tektin-1 (418 aa).

4 coiled-coil regions span residues lysine 21–glutamate 107, histidine 134–aspartate 177, asparagine 266–glycine 308, and alanine 333–tyrosine 384.

This sequence belongs to the tektin family. In terms of assembly, microtubule inner protein component of sperm flagellar doublet microtubules. In terms of processing, ubiquitinated, leading to its degradation. Deubiquitinated by USP16, promoting its stability. As to expression, predominantly expressed in testis. Expressed in airway epithelial cells.

The protein resides in the cytoplasm. The protein localises to the cytoskeleton. It is found in the cilium axoneme. It localises to the flagellum axoneme. Functionally, microtubule inner protein (MIP) part of the dynein-decorated doublet microtubules (DMTs) in cilia and flagellar axoneme. Forms filamentous polymers in the walls of ciliary and flagellar microtubules. In Homo sapiens (Human), this protein is Tektin-1 (TEKT1).